A 610-amino-acid polypeptide reads, in one-letter code: Ectonucleoside triphosphate diphosphohydrolase 7 (610 aa).

At 1-28 (MARISFSCLFPASWHCSLPSVTQFSRQR) the chain is on the cytoplasmic side. Residues 29-49 (VALLIISVAVFILVFAAVADL) form a helical membrane-spanning segment. The Vesicular portion of the chain corresponds to 50 to 555 (QLWSSRAFRD…VSWFRISFVY (506 aa)). The Proton acceptor role is filled by E217. N336 and N400 each carry an N-linked (GlcNAc...) asparagine glycan. The cysteines at positions 454 and 483 are disulfide-linked. Residues 556-576 (NHYLFFACILVVLLSIVLYIL) traverse the membrane as a helical segment. The Cytoplasmic portion of the chain corresponds to 577 to 610 (RLRRIHRRQARASALDLLLMEEGVHTVLEPGIPT).

It belongs to the GDA1/CD39 NTPase family. It depends on Ca(2+) as a cofactor. Requires Mg(2+) as cofactor.

Its subcellular location is the cytoplasmic vesicle membrane. The enzyme catalyses a ribonucleoside 5'-triphosphate + H2O = a ribonucleoside 5'-diphosphate + phosphate + H(+). It catalyses the reaction UTP + H2O = UDP + phosphate + H(+). It carries out the reaction GTP + H2O = GDP + phosphate + H(+). The catalysed reaction is CTP + H2O = CDP + phosphate + H(+). Its function is as follows. Catalyzes the hydrolysis of nucleoside triphosphates and diphosphates in a calcium- or magnesium-dependent manner. Preferentially hydrolyzes nucleoside 5'-triphosphates, with substrate preference for UTP &gt; GTP &gt; CTP. Hydrolyzes ATP and nucleoside diphosphates only to a minor extent. The protein is Ectonucleoside triphosphate diphosphohydrolase 7 (entpd7) of Xenopus tropicalis (Western clawed frog).